We begin with the raw amino-acid sequence, 332 residues long: Inositol 2-dehydrogenase 2 (332 aa).

The protein belongs to the Gfo/Idh/MocA family. As to quaternary structure, homotetramer.

The catalysed reaction is myo-inositol + NAD(+) = scyllo-inosose + NADH + H(+). Functionally, involved in the oxidation of myo-inositol (MI) to 2-keto-myo-inositol (2KMI or 2-inosose). The protein is Inositol 2-dehydrogenase 2 of Paenarthrobacter aurescens (strain TC1).